The primary structure comprises 201 residues: Probable quinol oxidase subunit 3 (201 aa).

5 helical membrane-spanning segments follow: residues 20–40 (LGFW…FATL), 62–82 (LVLI…IAIY), 91–111 (LMMF…GFEI), 133–153 (FFIL…WAIC), and 172–192 (FIVS…FTAV).

This sequence belongs to the cytochrome c oxidase subunit 3 family.

The protein localises to the cell membrane. The enzyme catalyses 2 a quinol + O2 = 2 a quinone + 2 H2O. In terms of biological role, catalyzes quinol oxidation with the concomitant reduction of oxygen to water. The sequence is that of Probable quinol oxidase subunit 3 (qoxC) from Staphylococcus aureus (strain MSSA476).